The chain runs to 620 residues: Delta(14)-sterol reductase LBR (620 aa).

Residues 1–62 form the Tudor domain; it reads MPGRKFADGE…DIKPLKSFKQ (62 aa). The Nuclear segment spans residues 1 to 215; the sequence is MPGRKFADGE…TPQRRDLEFG (215 aa). The segment at 52–111 is disordered; the sequence is SDIKPLKSFKQRKSGSTSSSPSRRRSSRSRSRSRSRSPGRAPKGSRRSVSASYQADAKEK. Position 55 is an N6-acetyllysine (Lys55). Ser59 and Ser67 each carry phosphoserine. Phosphoserine; by CDK1 occurs at positions 71 and 86. Residues 73–88 are compositionally biased toward basic residues; it reads SRRRSSRSRSRSRSRS. Residue Ser88 is modified to Phosphoserine. An O-linked (GlcNAc) serine glycan is attached at Ser96. A phosphoserine mark is found at Ser99 and Ser101. Thr123 is modified (phosphothreonine). The residue at position 133 (Ser133) is a Phosphoserine. Thr205 carries the phosphothreonine modification. Transmembrane regions (helical) follow at residues 216–236, 263–283, 304–324, 331–351, 452–472, 486–506, 525–547, and 566–586; these read GVPG…LLLL, VCGV…LPVG, LYAF…DIEL, FLQF…YLYA, IIHD…VPFT, DLSW…YVIF, LAHL…WWGF, and PCGF…ALLI. An N6-acetyllysine mark is found at Lys599 and Lys606.

Belongs to the ERG4/ERG24 family. As to quaternary structure, interacts with CBX5. Interacts with DNA. Interaction with DNA is sequence independent with higher affinity for supercoiled and relaxed circular DNA than linear DNA. Interacts with lamin B. Interacts with CLNK. Interacts with TMEM147; promoting LBR localization to the nucleus inner membrane. Phosphorylated by CDK1 in mitosis when the inner nuclear membrane breaks down into vesicles that dissociate from the lamina and the chromatin. It is phosphorylated by different protein kinases in interphase when the membrane is associated with these structures. Phosphorylation of LBR and HP1 proteins may be responsible for some of the alterations in chromatin organization and nuclear structure which occur at various times during the cell cycle. Phosphorylated by SRPK1. In late anaphase LBR is dephosphorylated, probably by PP1 and/or PP2A, allowing reassociation with chromatin.

Its subcellular location is the nucleus inner membrane. The protein resides in the nucleus. It localises to the cytoplasm. It is found in the endoplasmic reticulum membrane. It catalyses the reaction 5alpha-cholest-8,14-dien-3beta-ol + NADPH + H(+) = 5alpha-cholest-8-en-3beta-ol + NADP(+). The enzyme catalyses 4,4-dimethyl-5alpha-cholesta-8,24-dien-3beta-ol + NADP(+) = 4,4-dimethyl-5alpha-cholesta-8,14,24-trien-3beta-ol + NADPH + H(+). It carries out the reaction 4,4-dimethyl-8,14-cholestadien-3beta-ol + NADPH + H(+) = 4,4-dimethyl-5alpha-cholest-8-en-3beta-ol + NADP(+). Its pathway is steroid biosynthesis; cholesterol biosynthesis. In terms of biological role, catalyzes the reduction of the C14-unsaturated bond of lanosterol, as part of the metabolic pathway leading to cholesterol biosynthesis. Plays a critical role in myeloid cell cholesterol biosynthesis which is essential to both myeloid cell growth and functional maturation. Mediates the activation of NADPH oxidases, perhaps by maintaining critical levels of cholesterol required for membrane lipid raft formation during neutrophil differentiation. Anchors the lamina and the heterochromatin to the inner nuclear membrane. The protein is Delta(14)-sterol reductase LBR (Lbr) of Rattus norvegicus (Rat).